The following is a 231-amino-acid chain: MKIGIIAAMEEELVLLVNKLDEPKTENFGQFTYHTGRINGVEVALFLCGIGKVNAAVGATLLLDKFKPDYLINTGVAGAFPGNINIGDIVVSSEVRHYDADATAFDYEMGQIPQMPAAYQADKLLLGLAKKAWINEDSISVHQGPVLSGDSFIHTPQQISQIEQKFPDVMAVEMEGAAIAQTGFLFNVPFILIRSISDKVHEDGSSAIYEQSMEKAAANSVRMVLSMLKEL.

E12 acts as the Proton acceptor in catalysis. Residues G78, I153, and 174–175 (ME) contribute to the substrate site. The Proton donor role is filled by D198.

This sequence belongs to the PNP/UDP phosphorylase family. MtnN subfamily.

It catalyses the reaction S-adenosyl-L-homocysteine + H2O = S-(5-deoxy-D-ribos-5-yl)-L-homocysteine + adenine. The catalysed reaction is S-methyl-5'-thioadenosine + H2O = 5-(methylsulfanyl)-D-ribose + adenine. It carries out the reaction 5'-deoxyadenosine + H2O = 5-deoxy-D-ribose + adenine. It participates in amino-acid biosynthesis; L-methionine biosynthesis via salvage pathway; S-methyl-5-thio-alpha-D-ribose 1-phosphate from S-methyl-5'-thioadenosine (hydrolase route): step 1/2. In terms of biological role, catalyzes the irreversible cleavage of the glycosidic bond in both 5'-methylthioadenosine (MTA) and S-adenosylhomocysteine (SAH/AdoHcy) to adenine and the corresponding thioribose, 5'-methylthioribose and S-ribosylhomocysteine, respectively. Also cleaves 5'-deoxyadenosine, a toxic by-product of radical S-adenosylmethionine (SAM) enzymes, into 5-deoxyribose and adenine. In Maridesulfovibrio salexigens (strain ATCC 14822 / DSM 2638 / NCIMB 8403 / VKM B-1763) (Desulfovibrio salexigens), this protein is 5'-methylthioadenosine/S-adenosylhomocysteine nucleosidase.